Consider the following 269-residue polypeptide: Peptide deformylase 1A, chloroplastic/mitochondrial (269 aa).

A chloroplast and mitochondrion-targeting transit peptide spans 1–60 (MGLHRDEATAMETLFRVSLRLLPVSAAVTCRSIRFPVSRPGSSHLLNRKLYNLPTSSSSS). Substrate contacts are provided by residues 123–126 (PGVG) and Gly187. Cys188 provides a ligand contact to Zn(2+). Positions 191-196 (VDGFRA) are dimerization. Residue His230 coordinates Zn(2+). Glu231 is a catalytic residue. His234 lines the Zn(2+) pocket. The segment at 236-254 (DGNLYVDKMVPRTFRTVDN) is dimerization.

The protein belongs to the polypeptide deformylase family. As to quaternary structure, homodimer. Requires Zn(2+) as cofactor. In terms of tissue distribution, expressed in roots, leaves, flowers and siliques.

The protein localises to the plastid. Its subcellular location is the chloroplast stroma. The protein resides in the mitochondrion. It carries out the reaction N-terminal N-formyl-L-methionyl-[peptide] + H2O = N-terminal L-methionyl-[peptide] + formate. Its activity is regulated as follows. Inhibited by actinonin. Removes the formyl group from the N-terminal Met of newly synthesized proteins. The protein is Peptide deformylase 1A, chloroplastic/mitochondrial (PDF1A) of Arabidopsis thaliana (Mouse-ear cress).